Here is a 292-residue protein sequence, read N- to C-terminus: mRNA export protein 33 (292 aa).

A disordered region spans residues 1 to 76 (MPPKKAAKGK…RKRREEEKRA (76 aa)). Composition is skewed to basic and acidic residues over residues 9–26 (GKGDPGKAAKKDPTKKAA) and 58–76 (KDAKRQEALRKRREEEKRA). Residues 134–172 (INTDIVCKFFLEACETGKYGWLWQCPNGNMTCIYKHALP) form a C3H1-type zinc finger.

It is found in the cytoplasm. In terms of biological role, functions as a component of the nuclear pore complex (NPC). NPC components, collectively referred to as nucleoporins (NUPs), can play the role of both NPC structural components and of docking or interaction partners for transiently associated nuclear transport factors. Active directional transport is assured by both, a Phe-Gly (FG) repeat affinity gradient for these transport factors across the NPC and a transport cofactor concentration gradient across the nuclear envelope. Involved in the export of mRNA from the nucleus to the cytoplasm. May play a role in mitotic spindle formation and/or function. The sequence is that of mRNA export protein 33 (mep33) from Schizosaccharomyces pombe (strain 972 / ATCC 24843) (Fission yeast).